Consider the following 1113-residue polypeptide: Period circadian protein homolog 3 (1113 aa).

The interval 1–48 (MDPCGDPAVPGGDCPQTRGPGLQGASGQEGPLQGTCVDSSHSEHEDRN) is disordered. Positions 54-63 (LIMVVQEMKK) match the Nuclear export signal 1 motif. PAS domains lie at 120–187 (LASE…PTQL) and 258–324 (YEAP…KVLK). Positions 333–376 (HSPVRFCTQNGEYVILDSSWSSFVNPWSRKVSFIIGRHKVRTSP) constitute a PAC domain. The Nuclear export signal 3 motif lies at 399 to 408 (LQEQIHKLLL). Residues 418 to 427 (GYGSLGSSGS) are compositionally biased toward low complexity. Disordered regions lie at residues 418 to 451 (GYGS…GQHE), 485 to 530 (VAET…SSSY), 561 to 580 (TSSS…SQRD), 718 to 742 (HSRC…DTSS), and 871 to 906 (LVPA…PFIS). Polar residues-rich tracts occupy residues 428–441 (QEQH…SESS) and 501–530 (FSSS…SSSY). The interval 551 to 750 (LKRKCISCTN…SSPGAHLCPH (200 aa)) is CSNK1E binding domain. Positions 566–580 (EEAKPIPEVDSSQRD) are enriched in basic and acidic residues. Residues 719–735 (SRCAGSERQKHKRKKLP) carry the Nuclear localization signal motif. Residues 889–901 (RRVEENWEAHSEE) show a composition bias toward basic and acidic residues. A Phosphoserine modification is found at S907. The short motif at 913 to 920 (LQLNLLQE) is the Nuclear export signal 2 element. The tract at residues 921 to 1010 (EMPAPSESAD…DRQRDEALPG (90 aa)) is disordered. The segment covering 962 to 986 (ATATAQQESAAASGSSASSIYFSST) has biased composition (low complexity). Positions 993–1007 (SENRQRPQDRQRDEA) are enriched in basic and acidic residues. Positions 1035–1113 (ERGREEVLKQ…LEQHPAEDTS (79 aa)) are CRY binding domain.

Homodimer. Component of the circadian core oscillator, which includes the CRY proteins, CLOCK or NPAS2, BMAL1 or BMAL2, CSNK1D and/or CSNK1E, TIMELESS and the PER proteins. Interacts directly with PER1, PER2, CRY1, CRY2, and TIMELESS; interaction with CRY1 and CRY2 is weak and not rhythmic. Interacts with FBXW11 and BTRC. In terms of processing, phosphorylation by CSNK1E is weak and appears to require association with PER1 and translocation to the nucleus. Post-translationally, ubiquitinated. As to expression, widely expressed. Expressed in heart, brain, lung, liver, skeletal muscle, testis, and at low level in the spleen and kidney. In brain, mainly found in the SCN, hippocampus, piriform cortex, and cerebellum. Lower level of expression in the neocortex. Expression exhibits synchronous oscillations in liver, skeletal muscle and testis.

Its subcellular location is the cytoplasm. It is found in the nucleus. Its function is as follows. Originally described as a core component of the circadian clock. The circadian clock, an internal time-keeping system, regulates various physiological processes through the generation of approximately 24 hour circadian rhythms in gene expression, which are translated into rhythms in metabolism and behavior. It is derived from the Latin roots 'circa' (about) and 'diem' (day) and acts as an important regulator of a wide array of physiological functions including metabolism, sleep, body temperature, blood pressure, endocrine, immune, cardiovascular, and renal function. Consists of two major components: the central clock, residing in the suprachiasmatic nucleus (SCN) of the brain, and the peripheral clocks that are present in nearly every tissue and organ system. Both the central and peripheral clocks can be reset by environmental cues, also known as Zeitgebers (German for 'timegivers'). The predominant Zeitgeber for the central clock is light, which is sensed by retina and signals directly to the SCN. The central clock entrains the peripheral clocks through neuronal and hormonal signals, body temperature and feeding-related cues, aligning all clocks with the external light/dark cycle. Circadian rhythms allow an organism to achieve temporal homeostasis with its environment at the molecular level by regulating gene expression to create a peak of protein expression once every 24 hours to control when a particular physiological process is most active with respect to the solar day. Transcription and translation of core clock components (CLOCK, NPAS2, BMAL1, BMAL2, PER1, PER2, PER3, CRY1 and CRY2) plays a critical role in rhythm generation, whereas delays imposed by post-translational modifications (PTMs) are important for determining the period (tau) of the rhythms (tau refers to the period of a rhythm and is the length, in time, of one complete cycle). A diurnal rhythm is synchronized with the day/night cycle, while the ultradian and infradian rhythms have a period shorter and longer than 24 hours, respectively. Disruptions in the circadian rhythms contribute to the pathology of cardiovascular diseases, cancer, metabolic syndromes and aging. A transcription/translation feedback loop (TTFL) forms the core of the molecular circadian clock mechanism. Transcription factors, CLOCK or NPAS2 and BMAL1 or BMAL2, form the positive limb of the feedback loop, act in the form of a heterodimer and activate the transcription of core clock genes and clock-controlled genes (involved in key metabolic processes), harboring E-box elements (5'-CACGTG-3') within their promoters. The core clock genes: PER1/2/3 and CRY1/2 which are transcriptional repressors form the negative limb of the feedback loop and interact with the CLOCK|NPAS2-BMAL1|BMAL2 heterodimer inhibiting its activity and thereby negatively regulating their own expression. This heterodimer also activates nuclear receptors NR1D1, NR1D2, RORA, RORB and RORG, which form a second feedback loop and which activate and repress BMAL1 transcription, respectively. Has a redundant role with the other PER proteins PER1 and PER2 and is not essential for the circadian rhythms maintenance. In contrast, plays an important role in sleep-wake timing and sleep homeostasis probably through the transcriptional regulation of sleep homeostasis-related genes, without influencing circadian parameters. Can bind heme. The protein is Period circadian protein homolog 3 (Per3) of Mus musculus (Mouse).